The primary structure comprises 692 residues: Elongation factor G (692 aa).

The region spanning 8-283 (NRIRNIGIAA…AVIDYLPAPT (276 aa)) is the tr-type G domain. GTP contacts are provided by residues 17-24 (AHIDAGKT), 81-85 (DTPGH), and 135-138 (NKMD).

The protein belongs to the TRAFAC class translation factor GTPase superfamily. Classic translation factor GTPase family. EF-G/EF-2 subfamily.

It localises to the cytoplasm. In terms of biological role, catalyzes the GTP-dependent ribosomal translocation step during translation elongation. During this step, the ribosome changes from the pre-translocational (PRE) to the post-translocational (POST) state as the newly formed A-site-bound peptidyl-tRNA and P-site-bound deacylated tRNA move to the P and E sites, respectively. Catalyzes the coordinated movement of the two tRNA molecules, the mRNA and conformational changes in the ribosome. The chain is Elongation factor G from Helicobacter pylori (strain P12).